A 142-amino-acid chain; its full sequence is Endoribonuclease YbeY (142 aa).

Zn(2+) contacts are provided by H100, H104, and H110.

It belongs to the endoribonuclease YbeY family. It depends on Zn(2+) as a cofactor.

The protein resides in the cytoplasm. In terms of biological role, single strand-specific metallo-endoribonuclease involved in late-stage 70S ribosome quality control and in maturation of the 3' terminus of the 16S rRNA. The polypeptide is Endoribonuclease YbeY (Helicobacter pylori (strain G27)).